Consider the following 107-residue polypeptide: UPF0060 membrane protein mll7841 (107 aa).

The next 4 helical transmembrane spans lie at 4-24 (LFYT…WAWW), 30-50 (PLWL…LALV), 60-80 (AAYG…VEGV), and 87-107 (LAGA…PRGA).

Belongs to the UPF0060 family.

Its subcellular location is the cell inner membrane. The chain is UPF0060 membrane protein mll7841 from Mesorhizobium japonicum (strain LMG 29417 / CECT 9101 / MAFF 303099) (Mesorhizobium loti (strain MAFF 303099)).